Consider the following 78-residue polypeptide: Large ribosomal subunit protein bL28 (78 aa).

Residues 1 to 31 are disordered; it reads MAAHCQVTGAEPGFGHSISHSHRRNKRRFDP.

The protein belongs to the bacterial ribosomal protein bL28 family.

The polypeptide is Large ribosomal subunit protein bL28 (Paenarthrobacter aurescens (strain TC1)).